Consider the following 769-residue polypeptide: Glutathione biosynthesis bifunctional protein GshAB (769 aa).

Positions 1–347 (MLDSFKEDPN…QLADENENNI (347 aa)) are glutamate--cysteine ligase. The ATP-grasp domain occupies 514 to 768 (KLVLAEHDIR…IGDKILDFLF (255 aa)). An ATP-binding site is contributed by 541-599 (SLFEDKQIVVKPKSTNYGWGISIFKNKFTLEDYQEALNIAFSYDSSVIIEEFIPGDEFR). Positions 721, 738, and 740 each coordinate Mg(2+). 3 residues coordinate Mn(2+): Asp721, Glu738, and Asn740.

It in the N-terminal section; belongs to the glutamate--cysteine ligase type 1 family. Type 2 subfamily. Monomer. Mg(2+) serves as cofactor. Mn(2+) is required as a cofactor.

It carries out the reaction L-cysteine + L-glutamate + ATP = gamma-L-glutamyl-L-cysteine + ADP + phosphate + H(+). The catalysed reaction is gamma-L-glutamyl-L-cysteine + glycine + ATP = glutathione + ADP + phosphate + H(+). It participates in sulfur metabolism; glutathione biosynthesis; glutathione from L-cysteine and L-glutamate: step 1/2. It functions in the pathway sulfur metabolism; glutathione biosynthesis; glutathione from L-cysteine and L-glutamate: step 2/2. Its function is as follows. Synthesizes glutathione from L-glutamate and L-cysteine via gamma-L-glutamyl-L-cysteine. The sequence is that of Glutathione biosynthesis bifunctional protein GshAB from Listeria monocytogenes serovar 1/2a (strain ATCC BAA-679 / EGD-e).